Reading from the N-terminus, the 528-residue chain is Glucose-6-phosphate isomerase (528 aa).

Catalysis depends on Glu-322, which acts as the Proton donor. Catalysis depends on residues His-351 and Lys-455.

It belongs to the GPI family.

The protein localises to the cytoplasm. It carries out the reaction alpha-D-glucose 6-phosphate = beta-D-fructose 6-phosphate. It participates in carbohydrate biosynthesis; gluconeogenesis. The protein operates within carbohydrate degradation; glycolysis; D-glyceraldehyde 3-phosphate and glycerone phosphate from D-glucose: step 2/4. In terms of biological role, catalyzes the reversible isomerization of glucose-6-phosphate to fructose-6-phosphate. The chain is Glucose-6-phosphate isomerase from Nostoc sp. (strain PCC 7120 / SAG 25.82 / UTEX 2576).